Reading from the N-terminus, the 154-residue chain is Ribosome maturation factor RimP (154 aa).

It belongs to the RimP family.

The protein resides in the cytoplasm. In terms of biological role, required for maturation of 30S ribosomal subunits. The polypeptide is Ribosome maturation factor RimP (Flavobacterium psychrophilum (strain ATCC 49511 / DSM 21280 / CIP 103535 / JIP02/86)).